The following is a 459-amino-acid chain: Glycosyl hydrolase family 109 protein (459 aa).

The tat-type signal signal peptide spans Met-1–Ala-31. Residues Glu-64–Arg-65, Asp-86, Trp-135–His-138, Glu-155–Val-156, and Asn-184 each bind NAD(+). Substrate contacts are provided by residues Tyr-213, Arg-232, Tyr-244–His-247, and Tyr-326. Tyr-244 is an NAD(+) binding site.

This sequence belongs to the Gfo/Idh/MocA family. Glycosyl hydrolase 109 subfamily. NAD(+) serves as cofactor. Predicted to be exported by the Tat system. The position of the signal peptide cleavage has not been experimentally proven.

Functionally, glycosidase. The sequence is that of Glycosyl hydrolase family 109 protein from Shewanella sp. (strain W3-18-1).